A 400-amino-acid polypeptide reads, in one-letter code: Subtilisin-like protease 7 (400 aa).

Residues 1–20 (MGFITKAIPLALAAASVING) form the signal peptide. The propeptide occupies 21 to 119 (AEILETRAGV…IERDARVQIN (99 aa)). One can recognise an Inhibitor I9 domain in the interval 36 to 118 (KYIVVMNDGI…YIERDARVQI (83 aa)). The 272-residue stretch at 129–400 (SWGLARVGSK…SKLINNGSGM (272 aa)) folds into the Peptidase S8 domain. Catalysis depends on charge relay system residues Asp-161 and His-192. The N-linked (GlcNAc...) asparagine glycan is linked to Asn-252. Catalysis depends on Ser-346, which acts as the Charge relay system. Asn-396 carries N-linked (GlcNAc...) asparagine glycosylation.

This sequence belongs to the peptidase S8 family.

It is found in the secreted. In terms of biological role, secreted subtilisin-like serine protease with keratinolytic activity that contributes to pathogenicity. The chain is Subtilisin-like protease 7 (SUB7) from Trichophyton violaceum.